Reading from the N-terminus, the 211-residue chain is Probable nicotinate-nucleotide adenylyltransferase (211 aa).

The protein belongs to the NadD family.

It carries out the reaction nicotinate beta-D-ribonucleotide + ATP + H(+) = deamido-NAD(+) + diphosphate. The protein operates within cofactor biosynthesis; NAD(+) biosynthesis; deamido-NAD(+) from nicotinate D-ribonucleotide: step 1/1. Its function is as follows. Catalyzes the reversible adenylation of nicotinate mononucleotide (NaMN) to nicotinic acid adenine dinucleotide (NaAD). This chain is Probable nicotinate-nucleotide adenylyltransferase, found in Wigglesworthia glossinidia brevipalpis.